Consider the following 260-residue polypeptide: ProSAAS (260 aa).

The first 33 residues, 1–33 (MAGSPLLWGPRAGGVGLLVLLLLGLFRPPPALC), serve as a signal peptide directing secretion. Residues 34 to 215 (ARPVKEPRGL…SADSEGVAAP (182 aa)) form a proSAAS(1-180) region. Residue Thr-53 is glycosylated (O-linked (GalNAc...) threonine). Positions 165–188 (RPRPPVYDDGPAGPDAEEAGDETP) are disordered. The span at 179–188 (DAEEAGDETP) shows a compositional bias: acidic residues. Positions 221 to 260 (AADHDVGSELPPEGVLGALLRVKRLETPAPQVPARRLLPP) are C-terminal inhibitory domain; interacts with PCSK1. Ser-228 carries O-linked (GalNAc...) serine glycosylation. Residues 239-244 (LLRVKR) carry the Sufficient for inhibition of PCSK1 motif. O-linked (GalNAc...) threonine glycosylation occurs at Thr-247.

As to quaternary structure, interacts via the C-terminal inhibitory domain with PCSK1 66 kDa form. Proteolytically cleaved in the Golgi. In terms of processing, O-glycosylated with a core 1 or possibly core 8 glycan. In terms of tissue distribution, expressed in brain and pancreas.

The protein localises to the secreted. The protein resides in the golgi apparatus. It is found in the trans-Golgi network. In terms of biological role, may function in the control of the neuroendocrine secretory pathway. Proposed be a specific endogenous inhibitor of PCSK1. ProSAAS and Big PEN-LEN, both containing the C-terminal inhibitory domain, but not the further processed peptides reduce PCSK1 activity in the endoplasmic reticulum and Golgi. It reduces the activity of the 84 kDa form but not the autocatalytically derived 66 kDa form of PCSK1. Subsequent processing of proSAAS may eliminate the inhibition. Slows down convertase-mediated processing of proopiomelanocortin and proenkephalin. May control the intracellular timing of PCSK1 rather than its total level of activity. Functionally, endogenous ligand for GPR171. Neuropeptide involved in the regulation of feeding. This chain is ProSAAS (PCSK1N), found in Homo sapiens (Human).